Consider the following 222-residue polypeptide: Gamma-glutamylcyclotransferase and putative RNase MJ0434 (222 aa).

Arg75 is an active-site residue. Residues 75-82 carry the RX(4)HXY motif motif; it reads RDILIRKY. Tyr82 carries the O-di-AMP-tyrosine modification.

This sequence in the N-terminal section; belongs to the HepT RNase toxin family. In the C-terminal section; belongs to the gamma-glutamylcyclotransferase family. As to quaternary structure, homodimer, probably forms a complex with cognate antitoxin MJ0435. Post-translationally, modified by cognate antitoxin MJ0435; probably at least 2 successive AMPylation events occur on Tyr-82.

Functionally, probable toxic component of a putative type VII toxin-antitoxin (TA) system, probably an RNase. Probably neutralized by cognate antitoxin MJ0435. Neutralization may be due to AMPylation by MJ0435. The chain is Gamma-glutamylcyclotransferase and putative RNase MJ0434 from Methanocaldococcus jannaschii (strain ATCC 43067 / DSM 2661 / JAL-1 / JCM 10045 / NBRC 100440) (Methanococcus jannaschii).